A 262-amino-acid chain; its full sequence is Translation initiation factor 2 subunit alpha (262 aa).

An S1 motif domain is found at 15–86 (GELVVGTVHK…RKGHVDVSMK (72 aa)).

It belongs to the eIF-2-alpha family. As to quaternary structure, heterotrimer composed of an alpha, a beta and a gamma chain.

Functionally, eIF-2 functions in the early steps of protein synthesis by forming a ternary complex with GTP and initiator tRNA. The protein is Translation initiation factor 2 subunit alpha (eif2a) of Methanothermobacter thermautotrophicus (strain ATCC 29096 / DSM 1053 / JCM 10044 / NBRC 100330 / Delta H) (Methanobacterium thermoautotrophicum).